A 378-amino-acid chain; its full sequence is Squalene methyltransferase 2 (378 aa).

A helical membrane pass occupies residues 17–37; the sequence is LLTVKGATGLIAALILGYIII.

This sequence belongs to the class I-like SAM-binding methyltransferase superfamily. Erg6/SMT family.

It localises to the microsome membrane. The enzyme catalyses squalene + 2 S-adenosyl-L-methionine = 3,22-dimethyl-1,2,23,24-tetradehydro-2,3,22,23-tetrahydrosqualene + 2 S-adenosyl-L-homocysteine + 2 H(+). Converts squalene to mono- and dimethyl derivatives, but not to tri- and tetramethylated products. Unable to methylate cycloartenol, zymosterol or lanosterol. Methylates both C-3 and C22 positions, but only C-3 position in monomethylated products. Produces mainly monomethylated squalene and only 20% of dimethylated squalene. This chain is Squalene methyltransferase 2 (TMT-2), found in Botryococcus braunii (Green alga).